Reading from the N-terminus, the 175-residue chain is RNA pyrophosphohydrolase (175 aa).

The 144-residue stretch at G6–K149 folds into the Nudix hydrolase domain. Positions G38 to G59 match the Nudix box motif.

The protein belongs to the Nudix hydrolase family. RppH subfamily. The cofactor is a divalent metal cation.

In terms of biological role, accelerates the degradation of transcripts by removing pyrophosphate from the 5'-end of triphosphorylated RNA, leading to a more labile monophosphorylated state that can stimulate subsequent ribonuclease cleavage. The protein is RNA pyrophosphohydrolase of Yersinia enterocolitica serotype O:8 / biotype 1B (strain NCTC 13174 / 8081).